We begin with the raw amino-acid sequence, 133 residues long: Fluoride-specific ion channel FluC (133 aa).

Helical transmembrane passes span 12-32 (LAMT…ASLI), 41-61 (WGTL…LVWL), 76-96 (IVGV…CLVF), and 104-124 (MIGI…FAGA). Residues G81 and T84 each coordinate Na(+).

The protein belongs to the fluoride channel Fluc/FEX (TC 1.A.43) family.

It localises to the cell inner membrane. The catalysed reaction is fluoride(in) = fluoride(out). Its activity is regulated as follows. Na(+) is not transported, but it plays an essential structural role and its presence is essential for fluoride channel function. In terms of biological role, fluoride-specific ion channel. Important for reducing fluoride concentration in the cell, thus reducing its toxicity. The chain is Fluoride-specific ion channel FluC from Xanthomonas axonopodis pv. citri (strain 306).